We begin with the raw amino-acid sequence, 146 residues long: uncharacterized protein (146 aa).

Positions 1 to 120 constitute an N-acetyltransferase domain; that stretch reads MTDKFDANDE…TILKWEKNMD (120 aa).

Belongs to the acetyltransferase family.

This is an uncharacterized protein from Streptococcus pyogenes serotype M6 (strain ATCC BAA-946 / MGAS10394).